Here is a 159-residue protein sequence, read N- to C-terminus: 3-hydroxyacyl-[acyl-carrier-protein] dehydratase FabZ (159 aa).

Residue His-58 is part of the active site.

It belongs to the thioester dehydratase family. FabZ subfamily.

The protein localises to the cytoplasm. It carries out the reaction a (3R)-hydroxyacyl-[ACP] = a (2E)-enoyl-[ACP] + H2O. Involved in unsaturated fatty acids biosynthesis. Catalyzes the dehydration of short chain beta-hydroxyacyl-ACPs and long chain saturated and unsaturated beta-hydroxyacyl-ACPs. The chain is 3-hydroxyacyl-[acyl-carrier-protein] dehydratase FabZ from Helicobacter pylori (strain P12).